The following is a 257-amino-acid chain: Spermidine/putrescine transport system permease protein PotC (257 aa).

Topologically, residues 1 to 7 (MSRFFLR) are cytoplasmic. The chain crosses the membrane as a helical span at residues 8–27 (NAFMFVVYAYLYIPIIILVT). Residues 28 to 65 (NSFNKDRYGLSWKGFSWNWYERLFNNDTLIQAAIHSVT) are Periplasmic-facing. Positions 60–248 (AIHSVTIAFF…VLSLALVVLS (189 aa)) constitute an ABC transmembrane type-1 domain. The chain crosses the membrane as a helical span at residues 66 to 85 (IAFFAATLATIVGGLTAIAL). Residues 86 to 100 (YRYRFRGKQAVSGML) lie on the Cytoplasmic side of the membrane. Residues 101–120 (FIVMMSPDIVMAVSLLALFM) traverse the membrane as a helical segment. Residues 121 to 128 (VVGISLGF) are Periplasmic-facing. Residues 129 to 148 (WSLLLAHVTFCLPYVTVTIF) traverse the membrane as a helical segment. The Cytoplasmic segment spans residues 149–176 (SRLNGFDSRMLEAAKDLGASEVTILRKI). Residues 177 to 196 (ILPLALPAVVSGWLLSFTIS) traverse the membrane as a helical segment. Residues 197–231 (LDDVVVSSFVSGVSYEILPLRIFSLVKTGVTPEVN) are Periplasmic-facing. A helical transmembrane segment spans residues 232 to 251 (ALATIMIVLSLALVVLSQLI). Topologically, residues 252-257 (TRKNNH) are cytoplasmic.

The protein belongs to the binding-protein-dependent transport system permease family. CysTW subfamily.

It localises to the cell inner membrane. In terms of biological role, required for the activity of the bacterial periplasmic transport system of putrescine and spermidine. The polypeptide is Spermidine/putrescine transport system permease protein PotC (potC) (Haemophilus influenzae (strain ATCC 51907 / DSM 11121 / KW20 / Rd)).